A 549-amino-acid polypeptide reads, in one-letter code: Glucose-6-phosphate isomerase (549 aa).

Glu-353 functions as the Proton donor in the catalytic mechanism. Active-site residues include His-384 and Lys-513.

It belongs to the GPI family.

Its subcellular location is the cytoplasm. The enzyme catalyses alpha-D-glucose 6-phosphate = beta-D-fructose 6-phosphate. It participates in carbohydrate biosynthesis; gluconeogenesis. Its pathway is carbohydrate degradation; glycolysis; D-glyceraldehyde 3-phosphate and glycerone phosphate from D-glucose: step 2/4. Its function is as follows. Catalyzes the reversible isomerization of glucose-6-phosphate to fructose-6-phosphate. The polypeptide is Glucose-6-phosphate isomerase (Brucella anthropi (strain ATCC 49188 / DSM 6882 / CCUG 24695 / JCM 21032 / LMG 3331 / NBRC 15819 / NCTC 12168 / Alc 37) (Ochrobactrum anthropi)).